Reading from the N-terminus, the 1485-residue chain is Cystic fibrosis transmembrane conductance regulator (1485 aa).

The Cytoplasmic portion of the chain corresponds to 1 to 78 (MQRSPVEDAN…SLLRAMARCY (78 aa)). Residues 79-99 (IKPFLLFGFLLYIGEATKTVQ) form a helical membrane-spanning segment. The 271-residue stretch at 83-353 (LLFGFLLYIG…CMVLRMTVTR (271 aa)) folds into the ABC transmembrane type-1 1 domain. Over 100–123 (PQLLGRIIASFDPAHEPERANGYF) the chain is Extracellular. The helical transmembrane segment at 124–149 (LAFGLGLLFTARFLLLQPAMFGLHHL) threads the bilayer. Residues 150-195 (GMQIRIALFSIIYKKTLKLSSRVLDKISTGQLVSLMSANLGKFDQS) lie on the Cytoplasmic side of the membrane. A helical membrane pass occupies residues 196 to 216 (LGMAHFIWISPLQCILCTGLI). The Extracellular portion of the chain corresponds to 217-224 (WELIDVNS). Residues 225 to 245 (FCALAAISLLGVLQAFLSHKM) traverse the membrane as a helical segment. Topologically, residues 246-299 (GPYKAQKVLLTNKRLALTSEIMENLHSVKAYGWEEIMETLIKNIRQDEVKLTRK) are cytoplasmic. A helical transmembrane segment spans residues 300 to 320 (IGSLRYFYSSAYFFSAIFVIV). The Extracellular segment spans residues 321 to 340 (AAVVPHALSRGINLRRIFTT). Residues 341 to 363 (LSYCMVLRMTVTRQLPGSIQMWY) form a helical membrane-spanning segment. Over 364-856 (DTMRLIWKIE…YVRYVSNNKS (493 aa)) the chain is Cytoplasmic. Residues Trp-402, 457 to 464 (GSMGSGKS), and Gln-492 contribute to the ATP site. The region spanning 424-645 (NGDAGLFFTN…RPDFSSLLLG (222 aa)) is the ABC transporter 1 domain. The segment at 653–826 (SAERRCSILT…GILEEENIEA (174 aa)) is disordered R region. The chain crosses the membrane as a helical span at residues 857–877 (LLYVLIFILFIAAIEIAGSVA). One can recognise an ABC transmembrane type-1 2 domain in the interval 860-1163 (VLIFILFIAA…CVATSIAVDG (304 aa)). The Extracellular portion of the chain corresponds to 878-924 (GIFLITDELWREEHQRSEPNMTKHSNASSSGQTYAITVTPTSSYYIL). Asn-897 and Asn-903 each carry an N-linked (GlcNAc...) asparagine glycan. The discontinuously helical transmembrane segment at 925-946 (YIYVATSESLLAMGFFRGLPFV) threads the bilayer. Residues 947 to 996 (HTTITISKKLHQKMLHAVLSAPMSVLNTMKTGRIMNRFTKDMATIDDMLP) are Cytoplasmic-facing. The helical transmembrane segment at 997–1019 (LLMFDFVQLTVVVVGCILVVSIV) threads the bilayer. Topologically, residues 1020 to 1021 (RP) are extracellular. The chain crosses the membrane as a helical span at residues 1022–1042 (YIFLAATPLAIIFIVMRKYFL). The Cytoplasmic segment spans residues 1043-1103 (RTGQQLKQLE…TATWFLYLST (61 aa)). The chain crosses the membrane as a helical span at residues 1104-1124 (LRWFLFRADILFVFFFTLAAW). The Extracellular portion of the chain corresponds to 1125–1138 (IAVGTNQDKPGEIG). The chain crosses the membrane as a helical span at residues 1139-1159 (IIICLAMLILGTFQWCVATSI). Residues 1160–1485 (AVDGMMRSVD…AEDNIQDTRL (326 aa)) lie on the Cytoplasmic side of the membrane. The 234-residue stretch at 1211-1444 (IEVRNLTVKY…TSHLKQAISP (234 aa)) folds into the ABC transporter 2 domain. ATP contacts are provided by residues Tyr-1220 and 1245–1252 (GRTGSGKS). The interval 1452–1485 (PRRNSSMRTPQSKLSSVTQTLQEEAEDNIQDTRL) is disordered. Over residues 1454–1473 (RNSSMRTPQSKLSSVTQTLQ) the composition is skewed to polar residues. The segment covering 1474–1485 (EEAEDNIQDTRL) has biased composition (acidic residues). The PDZ-binding signature appears at 1483–1485 (TRL).

This sequence belongs to the ABC transporter superfamily. ABCC family. CFTR transporter (TC 3.A.1.202) subfamily. Monomer; does not require oligomerization for channel activity. Interacts with cse1l; this interaction may down-regulate cftr activity. Post-translationally, phosphorylated; this activates the channel. Dephosphorylation strongly decreases ATPase activity. Phosphorylation at PKA sites activates the channel. Phosphorylation at PKC sites enhances the response to phosphorylation by PKA. As to expression, detected in gut epithelium (at protein level). Detected in kidney, spleen, intestine and liver. Detected in pancreatic duct epithelium at 5 dpf and throughout adult life.

The protein resides in the apical cell membrane. The protein localises to the early endosome membrane. Its subcellular location is the cell membrane. It is found in the recycling endosome membrane. It localises to the endoplasmic reticulum membrane. The enzyme catalyses ATP + H2O + closed Cl(-) channel = ADP + phosphate + open Cl(-) channel.. The catalysed reaction is chloride(in) = chloride(out). It catalyses the reaction hydrogencarbonate(in) = hydrogencarbonate(out). It carries out the reaction ATP + H2O = ADP + phosphate + H(+). In terms of biological role, epithelial ion channel that plays an important role in the regulation of epithelial ion and water transport and fluid homeostasis. Mediates the transport of chloride ions across the cell membrane. Possesses an intrinsic ATPase activity and utilizes ATP to gate its channel; the passive flow of anions through the channel is gated by cycles of ATP binding and hydrolysis by the ATP-binding domains. The ion channel is also permeable to HCO(3)(-); selectivity depends on the extracellular chloride concentration. Exerts its function also by modulating the activity of other ion channels and transporters. Contributes to the regulation of the pH and the ion content of the epithelial fluid layer. Required for normal fluid homeostasis in the gut. Required for normal volume expansion and cell shape changes of Kupffer's vesicle during embryonic development and for normal establishment of left-right body patterning. Required for normal resistance to infection by P.aeruginosa strain PA14 and strain SMC573. This chain is Cystic fibrosis transmembrane conductance regulator, found in Danio rerio (Zebrafish).